The primary structure comprises 352 residues: A-type ATP synthase subunit C (352 aa).

Belongs to the V-ATPase V0D/AC39 subunit family. As to quaternary structure, has multiple subunits with at least A(3), B(3), C, D, E, F, H, I and proteolipid K(x).

Its subcellular location is the cell membrane. Functionally, component of the A-type ATP synthase that produces ATP from ADP in the presence of a proton gradient across the membrane. This Halobacterium salinarum (strain ATCC 29341 / DSM 671 / R1) protein is A-type ATP synthase subunit C.